The following is a 217-amino-acid chain: Ras-related protein RGP2 (217 aa).

Residues 19 to 26 (GDSGVGKS), 67 to 71 (DTAGQ), and 125 to 128 (NKSD) each bind GTP. 2 S-geranylgeranyl cysteine lipidation sites follow: cysteine 214 and cysteine 215.

This sequence belongs to the small GTPase superfamily. Rab family.

The protein resides in the cell membrane. This chain is Ras-related protein RGP2 (RGP2), found in Oryza sativa subsp. japonica (Rice).